Here is a 441-residue protein sequence, read N- to C-terminus: Homogentisate 1,2-dioxygenase (441 aa).

H287 (proton acceptor) is an active-site residue. Fe cation-binding residues include H330 and E336. Residues Y345 and H366 each coordinate homogentisate. H366 is a Fe cation binding site.

It belongs to the homogentisate dioxygenase family. Hexamer; dimer of trimers. It depends on Fe cation as a cofactor.

It carries out the reaction homogentisate + O2 = 4-maleylacetoacetate + H(+). It functions in the pathway amino-acid degradation; L-phenylalanine degradation; acetoacetate and fumarate from L-phenylalanine: step 4/6. Involved in the catabolism of homogentisate (2,5-dihydroxyphenylacetate or 2,5-OH-PhAc), a central intermediate in the degradation of phenylalanine and tyrosine. Catalyzes the oxidative ring cleavage of the aromatic ring of homogentisate to yield maleylacetoacetate. The chain is Homogentisate 1,2-dioxygenase from Xanthomonas oryzae pv. oryzae (strain MAFF 311018).